The chain runs to 163 residues: MATDVAVETTMGTFTLELYTNHAPKTCKNFATLADRGYYDSTVFHRIIKDFMIQGGDPTGTGRGGSSIYGEKFEDEIHPGLKHTGAGVLSMANAGPNTNGSQFFITLAPTPWLDGKHTIFGRVKKGMGVIRRMGMVPTDKEDRPATEVKIVKARVVREEDMEA.

The PPIase cyclophilin-type domain occupies 1–155 (MATDVAVETT…TEVKIVKARV (155 aa)).

Belongs to the cyclophilin-type PPIase family. PPIL1 subfamily.

It catalyses the reaction [protein]-peptidylproline (omega=180) = [protein]-peptidylproline (omega=0). Functionally, PPIases accelerate the folding of proteins. It catalyzes the cis-trans isomerization of proline imidic peptide bonds in oligopeptides. This is Peptidyl-prolyl cis-trans isomerase-like 1 (ppi-1) from Neurospora crassa (strain ATCC 24698 / 74-OR23-1A / CBS 708.71 / DSM 1257 / FGSC 987).